A 387-amino-acid polypeptide reads, in one-letter code: Monopolar spindle protein 2 (387 aa).

Residues 117–232 (MNLNSPSKFL…NSSRTSDPGS (116 aa)) adopt a coiled-coil conformation. A disordered region spans residues 216–235 (RQVEDNQNSSRTSDPGSPLV). Residues 220-230 (DNQNSSRTSDP) are compositionally biased toward polar residues. A helical membrane pass occupies residues 311–327 (IRIIVCFALLAGVLPYI).

The protein belongs to the MPS2 family. As to quaternary structure, interacts with BBP1, MPS3, and SPC24.

It localises to the nucleus membrane. The protein resides in the cytoplasm. It is found in the cytoskeleton. Its subcellular location is the microtubule organizing center. The protein localises to the spindle pole body. Functionally, component of the spindle pole body (SPB) required for insertion of the nascent SPB into the nuclear envelope and for the proper execution of spindle pole body (SPB) duplication. The chain is Monopolar spindle protein 2 (MPS2) from Saccharomyces cerevisiae (strain ATCC 204508 / S288c) (Baker's yeast).